A 375-amino-acid polypeptide reads, in one-letter code: Hemolysin BL-binding component (375 aa).

An N-terminal signal peptide occupies residues 1 to 31 (MIKKIPYKLLAVSTLLTITTANVVSPVATFA). Residues 232–252 (FNVMKGAILGLPIIGGIIVGV) form a helical membrane-spanning segment.

As to quaternary structure, composed of a binding component, B, and two lytic components, L1 and L2. All three subunits act synergically to cause hemolysis.

It is found in the secreted. Its subcellular location is the host cell membrane. Functionally, cytotoxic protein, part of the enterotoxin complex. Responsible for binding to erythrocytes. This enterotoxin is thought to be the cause of the diarrheal form of gastroenteritis caused by food-borne strains of B.cereus. This chain is Hemolysin BL-binding component (hblA), found in Bacillus cereus.